We begin with the raw amino-acid sequence, 102 residues long: ATP-dependent Clp protease adapter protein ClpS (102 aa).

Basic and acidic residues predominate over residues 1 to 18; sequence MSQFDHQHLSDTEEKQEL. Residues 1 to 21 are disordered; sequence MSQFDHQHLSDTEEKQELKPP.

Belongs to the ClpS family. Binds to the N-terminal domain of the chaperone ClpA.

Its function is as follows. Involved in the modulation of the specificity of the ClpAP-mediated ATP-dependent protein degradation. This Idiomarina loihiensis (strain ATCC BAA-735 / DSM 15497 / L2-TR) protein is ATP-dependent Clp protease adapter protein ClpS.